The sequence spans 365 residues: Methylthioribose-1-phosphate isomerase (365 aa).

Substrate is bound by residues Arg-53–Ala-55, Arg-90, and Gln-201. Catalysis depends on Asp-242, which acts as the Proton donor. Substrate is bound at residue Asn-252–Lys-253.

Belongs to the eIF-2B alpha/beta/delta subunits family. MtnA subfamily.

The catalysed reaction is 5-(methylsulfanyl)-alpha-D-ribose 1-phosphate = 5-(methylsulfanyl)-D-ribulose 1-phosphate. The protein operates within amino-acid biosynthesis; L-methionine biosynthesis via salvage pathway; L-methionine from S-methyl-5-thio-alpha-D-ribose 1-phosphate: step 1/6. Its function is as follows. Catalyzes the interconversion of methylthioribose-1-phosphate (MTR-1-P) into methylthioribulose-1-phosphate (MTRu-1-P). This Methylorubrum extorquens (strain CM4 / NCIMB 13688) (Methylobacterium extorquens) protein is Methylthioribose-1-phosphate isomerase.